Consider the following 352-residue polypeptide: Molybdenum import ATP-binding protein ModC (352 aa).

The region spanning 1–229 is the ABC transporter domain; it reads MLELNFSQTL…SVMNPWLPKE (229 aa). 31-38 lines the ATP pocket; it reads GVSGAGKT. A Mop domain is found at 289 to 352; the sequence is QTSIRNVLRA…AQIKSVSITA (64 aa).

It belongs to the ABC transporter superfamily. Molybdate importer (TC 3.A.1.8) family. The complex is composed of two ATP-binding proteins (ModC), two transmembrane proteins (ModB) and a solute-binding protein (ModA).

The protein resides in the cell inner membrane. It carries out the reaction molybdate(out) + ATP + H2O = molybdate(in) + ADP + phosphate + H(+). In terms of biological role, part of the ABC transporter complex ModABC involved in molybdenum import. Responsible for energy coupling to the transport system. In Shigella dysenteriae serotype 1 (strain Sd197), this protein is Molybdenum import ATP-binding protein ModC.